An 874-amino-acid chain; its full sequence is Alanine--tRNA ligase (874 aa).

4 residues coordinate Zn(2+): His-562, His-566, Cys-665, and His-669.

This sequence belongs to the class-II aminoacyl-tRNA synthetase family. It depends on Zn(2+) as a cofactor.

It is found in the cytoplasm. It carries out the reaction tRNA(Ala) + L-alanine + ATP = L-alanyl-tRNA(Ala) + AMP + diphosphate. Functionally, catalyzes the attachment of alanine to tRNA(Ala) in a two-step reaction: alanine is first activated by ATP to form Ala-AMP and then transferred to the acceptor end of tRNA(Ala). Also edits incorrectly charged Ser-tRNA(Ala) and Gly-tRNA(Ala) via its editing domain. In Pseudomonas fluorescens (strain ATCC BAA-477 / NRRL B-23932 / Pf-5), this protein is Alanine--tRNA ligase.